The primary structure comprises 305 residues: UDP-3-O-acyl-N-acetylglucosamine deacetylase (305 aa).

Residues H79, H238, and D242 each contribute to the Zn(2+) site. H265 serves as the catalytic Proton donor.

This sequence belongs to the LpxC family. Zn(2+) is required as a cofactor.

The catalysed reaction is a UDP-3-O-[(3R)-3-hydroxyacyl]-N-acetyl-alpha-D-glucosamine + H2O = a UDP-3-O-[(3R)-3-hydroxyacyl]-alpha-D-glucosamine + acetate. It participates in glycolipid biosynthesis; lipid IV(A) biosynthesis; lipid IV(A) from (3R)-3-hydroxytetradecanoyl-[acyl-carrier-protein] and UDP-N-acetyl-alpha-D-glucosamine: step 2/6. Catalyzes the hydrolysis of UDP-3-O-myristoyl-N-acetylglucosamine to form UDP-3-O-myristoylglucosamine and acetate, the committed step in lipid A biosynthesis. The protein is UDP-3-O-acyl-N-acetylglucosamine deacetylase of Salmonella typhi.